The chain runs to 654 residues: MSAPLIELCDIRKAYGGIDSPKVEVLRGISLSIHPGEFVAIVGASGSGKSTLMNILGCLDRPTSGSYRFAGRDVAELDSDELAWLRREAFGFVFQGYHLIPSGSAQENVEMPAIYAGTPPAERHARALALLDRLGLASRTGNRPHQLSGGQQQRVSIARALMNGGHIILADEPTGALDSHSGAEVMALLDELASQGHVIILITHDREVAARAQRIIEIRDGQMVSDSAASQPSPAQPEQLQANDLRQRLDRGAILKGAWKGEMIEALQAAWRVMWINRFRTALTLLGIIIGVASVVVMLAVGEGSKRQVMAQMAAFGSNILYLNGKRATAQEPGGIVTLDDVAAIGELPQVLHVMPVIGGQLMVRQGNSSQKFYVGGNNTWFPAIFNWPVVEGTFFSEADEASGAAVAVIGQKVRSKMFGEGSNPLGQYLLIGNVPFQVVGILAAKGASSGSEDSDERIVVPYSAASIRLFGSHDPEYVAIAAIDSRRVNETEAAIDRLLRQRHQGKHDFDLTNDAALIQAEARTQNSLSLMLGAIAAISLLVGGIGVMNIMLMTVRERTREIGIRMATGARQRDILRQFLTEAVMLSMVGGVTGIVIALLVGGGLLLADIAVAFALPAILGAFACAVITGVVFGFMPARKAARLDPVKALTSE.

The ABC transporter domain maps to 6–245; the sequence is IELCDIRKAY…QPEQLQANDL (240 aa). 43-50 serves as a coordination point for ATP; that stretch reads GASGSGKS. The next 4 membrane-spanning stretches (helical) occupy residues 282 to 302, 529 to 549, 596 to 616, and 617 to 637; these read ALTLLGIIIGVASVVVMLAVG, LSLMLGAIAAISLLVGGIGVM, IVIALLVGGGLLLADIAVAFA, and LPAILGAFACAVITGVVFGFM.

Belongs to the ABC transporter superfamily. Macrolide exporter (TC 3.A.1.122) family. As to quaternary structure, part of the tripartite efflux system PvdRT-OpmQ, which is composed of an inner membrane component with both ATPase and permease domains, PvdT, a periplasmic membrane fusion protein, PvdR, and an outer membrane component, OpmQ.

It is found in the cell inner membrane. In terms of biological role, part of the tripartite efflux system PvdRT-OpmQ required for the secretion into the extracellular milieu of the siderophore pyoverdine (PVD), which is involved in iron acquisition. This subunit binds PVD and drives its secretion by hydrolyzing ATP. The system is responsible for export of newly synthesized PVD after the final steps of biosynthesis have taken place in the periplasm. It is also responsible for recycling of PVD after internalization of ferri-PVD into the periplasm by the outer-membrane receptor FpvA and release of iron from PVD, thus making PVD available for new cycles of iron uptake. This Pseudomonas entomophila (strain L48) protein is Pyoverdine export ATP-binding/permease protein PvdT.